The following is a 258-amino-acid chain: Acetylglutamate kinase (258 aa).

Substrate-binding positions include 44–45, R66, and N158; that span reads GG. ATP is bound by residues 181–186 and 209–211; these read DVSGIL and IIT.

This sequence belongs to the acetylglutamate kinase family. ArgB subfamily. Homodimer.

The protein localises to the cytoplasm. The enzyme catalyses N-acetyl-L-glutamate + ATP = N-acetyl-L-glutamyl 5-phosphate + ADP. It participates in amino-acid biosynthesis; L-arginine biosynthesis; N(2)-acetyl-L-ornithine from L-glutamate: step 2/4. Catalyzes the ATP-dependent phosphorylation of N-acetyl-L-glutamate. The polypeptide is Acetylglutamate kinase (Citrobacter koseri (strain ATCC BAA-895 / CDC 4225-83 / SGSC4696)).